The following is a 425-amino-acid chain: UPF0229 protein ETA_15540 (425 aa).

Positions 60–111 are disordered; it reads NEPSFHQGRGGERYRVHPGNDHFVQNDRVDRPQGGGAGGSGQGNAGKDGEGQ. The segment covering 68–90 has biased composition (basic and acidic residues); that stretch reads RGGERYRVHPGNDHFVQNDRVDR. The span at 92–105 shows a compositional bias: gly residues; sequence QGGGAGGSGQGNAG.

It belongs to the UPF0229 family.

The protein is UPF0229 protein ETA_15540 of Erwinia tasmaniensis (strain DSM 17950 / CFBP 7177 / CIP 109463 / NCPPB 4357 / Et1/99).